The primary structure comprises 118 residues: Cytochrome b-c1 complex subunit 7 (118 aa).

Residues 1 to 32 (MVHLTKTLRFINNPGFRKFYYGLQGYNKYGLY) are igE-binding. Immunodominant epitope; induces specific IgE antibody production in mice. Causes degranulation of rat basophilic leukemia (RBL) cells and the release of beta-hexosaminidase from them.

The protein belongs to the UQCRB/QCR7 family. Component of the ubiquinol-cytochrome c oxidoreductase (cytochrome b-c1 complex, complex III, CIII), a multisubunit enzyme composed of 3 respiratory subunits cytochrome b, cytochrome c1 and Rieske protein, 2 core protein subunits, and additional low-molecular weight protein subunits. The complex exists as an obligatory dimer and forms supercomplexes (SCs) in the inner mitochondrial membrane with cytochrome c oxidase (complex IV, CIV).

It is found in the mitochondrion inner membrane. Functionally, component of the ubiquinol-cytochrome c oxidoreductase, a multisubunit transmembrane complex that is part of the mitochondrial electron transport chain which drives oxidative phosphorylation. The respiratory chain contains 3 multisubunit complexes succinate dehydrogenase (complex II, CII), ubiquinol-cytochrome c oxidoreductase (cytochrome b-c1 complex, complex III, CIII) and cytochrome c oxidase (complex IV, CIV), that cooperate to transfer electrons derived from NADH and succinate to molecular oxygen, creating an electrochemical gradient over the inner membrane that drives transmembrane transport and the ATP synthase. The cytochrome b-c1 complex catalyzes electron transfer from ubiquinol to cytochrome c, linking this redox reaction to translocation of protons across the mitochondrial inner membrane, with protons being carried across the membrane as hydrogens on the quinol. In the process called Q cycle, 2 protons are consumed from the matrix, 4 protons are released into the intermembrane space and 2 electrons are passed to cytochrome c. This Dermatophagoides farinae (American house dust mite) protein is Cytochrome b-c1 complex subunit 7.